Consider the following 831-residue polypeptide: von Willebrand factor A domain-containing protein DDB_G0285981 (831 aa).

In terms of domain architecture, VIT spans 60–188 (RDTFGLKTFS…NVTIHLTIIS (129 aa)). The VWFA domain occupies 312 to 480 (EFIFLIDCSG…NFEEQVMKLV (169 aa)).

The polypeptide is von Willebrand factor A domain-containing protein DDB_G0285981 (Dictyostelium discoideum (Social amoeba)).